Reading from the N-terminus, the 235-residue chain is Ribonuclease 3 (235 aa).

Residues 8–137 (PAELARRIGI…VIGAIFLSGG (130 aa)) form the RNase III domain. Glu-50 serves as a coordination point for Mg(2+). Asp-54 is a catalytic residue. 2 residues coordinate Mg(2+): Asp-123 and Glu-126. Residue Glu-126 is part of the active site. One can recognise a DRBM domain in the interval 163-232 (DNKTAFQEWV…AGRAMREWAG (70 aa)). Residues 211–235 (QGRTKKEAEQQAAGRAMREWAGRKG) are disordered. Residues 226 to 235 (AMREWAGRKG) show a composition bias toward basic and acidic residues.

It belongs to the ribonuclease III family. In terms of assembly, homodimer. Requires Mg(2+) as cofactor.

The protein localises to the cytoplasm. It carries out the reaction Endonucleolytic cleavage to 5'-phosphomonoester.. Digests double-stranded RNA. Involved in the processing of primary rRNA transcript to yield the immediate precursors to the large and small rRNAs (23S and 16S). Processes some mRNAs, and tRNAs when they are encoded in the rRNA operon. Processes pre-crRNA and tracrRNA of type II CRISPR loci if present in the organism. In Heliobacterium modesticaldum (strain ATCC 51547 / Ice1), this protein is Ribonuclease 3.